The following is a 71-amino-acid chain: Palustrin-2AJ2 (71 aa).

Positions 1 to 22 are cleaved as a signal peptide; sequence MFTLKKPLLVLLFLGTVSLSLC. The propeptide occupies 23-40; it reads EQERAADDDEGEVIEEEV. The cysteines at positions 65 and 71 are disulfide-linked.

As to expression, expressed by the skin glands.

It localises to the secreted. Its function is as follows. Displays broad-spectrum antibacterial activity against a range of Gram-positive and Gram-negative bacteria. Has low hemolytic activity, low cytotoxicity and low antioxidant activity. In Amolops jingdongensis (Chinese torrent frog), this protein is Palustrin-2AJ2.